The chain runs to 650 residues: Acetyl-coenzyme A synthetase (650 aa).

Residues 191-194 (RAGR), threonine 311, and asparagine 335 contribute to the CoA site. ATP-binding positions include 387–389 (GEP), 411–416 (DTWWQT), aspartate 500, and arginine 515. Residue serine 523 coordinates CoA. Arginine 526 lines the ATP pocket. Positions 537, 539, and 542 each coordinate Mg(2+). Arginine 584 is a binding site for CoA. At lysine 609 the chain carries N6-acetyllysine.

The protein belongs to the ATP-dependent AMP-binding enzyme family. The cofactor is Mg(2+). In terms of processing, acetylated. Deacetylation by the SIR2-homolog deacetylase activates the enzyme.

It carries out the reaction acetate + ATP + CoA = acetyl-CoA + AMP + diphosphate. Its function is as follows. Catalyzes the conversion of acetate into acetyl-CoA (AcCoA), an essential intermediate at the junction of anabolic and catabolic pathways. AcsA undergoes a two-step reaction. In the first half reaction, AcsA combines acetate with ATP to form acetyl-adenylate (AcAMP) intermediate. In the second half reaction, it can then transfer the acetyl group from AcAMP to the sulfhydryl group of CoA, forming the product AcCoA. This Shewanella halifaxensis (strain HAW-EB4) protein is Acetyl-coenzyme A synthetase.